The chain runs to 250 residues: 5-oxoprolinase subunit A (250 aa).

The protein belongs to the LamB/PxpA family. Forms a complex composed of PxpA, PxpB and PxpC.

The enzyme catalyses 5-oxo-L-proline + ATP + 2 H2O = L-glutamate + ADP + phosphate + H(+). Functionally, catalyzes the cleavage of 5-oxoproline to form L-glutamate coupled to the hydrolysis of ATP to ADP and inorganic phosphate. The chain is 5-oxoprolinase subunit A from Pseudomonas fluorescens (strain Pf0-1).